The following is a 326-amino-acid chain: Apolipoprotein F (326 aa).

Positions 1–35 are cleaved as a signal peptide; the sequence is MTGLCGYSAPDMRGLRLIMIPVELLLCYLLLHPVD. Residues 36–164 constitute a propeptide that is removed on maturation; that stretch reads ATSYGKQTNV…EQQSTGRVGR (129 aa). N-linked (GlcNAc...) asparagine glycosylation is present at N118. The O-linked (GalNAc...) threonine glycan is linked to T274. Residue S323 is modified to Phosphoserine.

It belongs to the apolipoprotein F family. In terms of processing, O-glycosylated with core 1 or possibly core 8 glycans. As to expression, expressed by the liver and secreted in plasma.

Its subcellular location is the secreted. Minor apolipoprotein that associates with LDL. Inhibits cholesteryl ester transfer protein (CETP) activity and appears to be an important regulator of cholesterol transport. Also associates to a lesser degree with VLDL, Apo-AI and Apo-AII. This Homo sapiens (Human) protein is Apolipoprotein F (APOF).